Here is a 107-residue protein sequence, read N- to C-terminus: uncharacterized protein (107 aa).

3 helical membrane-spanning segments follow: residues 16–36 (VIPC…SESL), 47–67 (IISL…HSLV), and 85–105 (LIVL…TSLI).

The protein resides in the membrane. This is an uncharacterized protein from Saccharomyces cerevisiae (strain ATCC 204508 / S288c) (Baker's yeast).